A 76-amino-acid chain; its full sequence is Cytochrome c oxidase subunit 6C (76 aa).

The Mitochondrial matrix portion of the chain corresponds to 4 to 22; it reads GALLPKPQMRGLLAKRLRV. A helical membrane pass occupies residues 23 to 44; sequence HIAGAFIVALGVAAAYKFGVAE. The Mitochondrial intermembrane segment spans residues 45 to 76; that stretch reads PRKKAYAEFYRNYDSMKDFEEMRKAGIFQSAK.

The protein belongs to the cytochrome c oxidase subunit 6c family. As to quaternary structure, component of the cytochrome c oxidase (complex IV, CIV), a multisubunit enzyme composed of 14 subunits. The complex is composed of a catalytic core of 3 subunits MT-CO1, MT-CO2 and MT-CO3, encoded in the mitochondrial DNA, and 11 supernumerary subunits COX4I, COX5A, COX5B, COX6A, COX6B, COX6C, COX7A, COX7B, COX7C, COX8 and NDUFA4, which are encoded in the nuclear genome. The complex exists as a monomer or a dimer and forms supercomplexes (SCs) in the inner mitochondrial membrane with NADH-ubiquinone oxidoreductase (complex I, CI) and ubiquinol-cytochrome c oxidoreductase (cytochrome b-c1 complex, complex III, CIII), resulting in different assemblies (supercomplex SCI(1)III(2)IV(1) and megacomplex MCI(2)III(2)IV(2)). In terms of processing, acetylation of Lys-61 is observed in liver mitochondria from fasted mice but not from fed mice.

It localises to the mitochondrion inner membrane. It participates in energy metabolism; oxidative phosphorylation. Its function is as follows. Component of the cytochrome c oxidase, the last enzyme in the mitochondrial electron transport chain which drives oxidative phosphorylation. The respiratory chain contains 3 multisubunit complexes succinate dehydrogenase (complex II, CII), ubiquinol-cytochrome c oxidoreductase (cytochrome b-c1 complex, complex III, CIII) and cytochrome c oxidase (complex IV, CIV), that cooperate to transfer electrons derived from NADH and succinate to molecular oxygen, creating an electrochemical gradient over the inner membrane that drives transmembrane transport and the ATP synthase. Cytochrome c oxidase is the component of the respiratory chain that catalyzes the reduction of oxygen to water. Electrons originating from reduced cytochrome c in the intermembrane space (IMS) are transferred via the dinuclear copper A center (CU(A)) of subunit 2 and heme A of subunit 1 to the active site in subunit 1, a binuclear center (BNC) formed by heme A3 and copper B (CU(B)). The BNC reduces molecular oxygen to 2 water molecules using 4 electrons from cytochrome c in the IMS and 4 protons from the mitochondrial matrix. This chain is Cytochrome c oxidase subunit 6C (Cox6c), found in Mus musculus (Mouse).